A 354-amino-acid chain; its full sequence is Opsin-1, short-wave-sensitive 2 (354 aa).

Residues 1-43 are Extracellular-facing; that stretch reads MKQQQQTPELFEDFHMPITLDVSNISAYSPFLVPQDHLGHSGV. An N-linked (GlcNAc...) asparagine glycan is attached at Asn24. The helical transmembrane segment at 44–68 threads the bilayer; sequence FMGMSAFMLFLFIAGTAINVLTIVC. Residues 69–80 are Cytoplasmic-facing; that stretch reads TIQYKKLRSHLN. Residues 81–106 traverse the membrane as a helical segment; it reads YILVNLAISNLWVSVFGSSVAFYAFY. Residues 107-120 lie on the Extracellular side of the membrane; the sequence is KKYFVFGPIGCKIE. Cys117 and Cys194 are oxidised to a cystine. Residues 121–140 form a helical membrane-spanning segment; it reads GFTSTIGGMVSLWSLAVVAL. Topologically, residues 141–159 are cytoplasmic; sequence ERWLVICKPLGNFTFKTPH. Residues 160 to 183 traverse the membrane as a helical segment; that stretch reads AIAGCILPWCMALAAGLPPLLGWS. The Extracellular portion of the chain corresponds to 184–209; it reads RYIPEGLQCSCGPDWYTTNNKFNNES. The N-linked (GlcNAc...) asparagine glycan is linked to Asn207. The chain crosses the membrane as a helical span at residues 210-237; it reads YVMFLFCFCFAVPFSTIVFCYGQLLITL. Over 238–259 the chain is Cytoplasmic; sequence KLAAKAQADSASTQKAEREVTK. The chain crosses the membrane as a helical span at residues 260 to 283; it reads MVVVMVFGFLICWGPYAIFAIWVV. At 284–291 the chain is on the extracellular side; the sequence is SNRGAPFD. Residues 292 to 316 traverse the membrane as a helical segment; sequence LRLATIPSCLCKASTVYNPVIYVLM. Residue Lys303 is modified to N6-(retinylidene)lysine. At 317-354 the chain is on the cytoplasmic side; it reads NKQFRSCMMKMVFNKNIEEDEASSSSQVTQVSSVAPEK.

Belongs to the G-protein coupled receptor 1 family. Opsin subfamily. Post-translationally, phosphorylated on some or all of the serine and threonine residues present in the C-terminal region. As to expression, retinal long single cone outer segments.

The protein resides in the membrane. In terms of biological role, visual pigments are the light-absorbing molecules that mediate vision. They consist of an apoprotein, opsin, covalently linked to cis-retinal. The protein is Opsin-1, short-wave-sensitive 2 (opn1sw2) of Danio rerio (Zebrafish).